We begin with the raw amino-acid sequence, 190 residues long: Imidazoleglycerol-phosphate dehydratase (190 aa).

The protein belongs to the imidazoleglycerol-phosphate dehydratase family.

The protein resides in the cytoplasm. It carries out the reaction D-erythro-1-(imidazol-4-yl)glycerol 3-phosphate = 3-(imidazol-4-yl)-2-oxopropyl phosphate + H2O. Its pathway is amino-acid biosynthesis; L-histidine biosynthesis; L-histidine from 5-phospho-alpha-D-ribose 1-diphosphate: step 6/9. The polypeptide is Imidazoleglycerol-phosphate dehydratase (Methanococcus maripaludis (strain C7 / ATCC BAA-1331)).